Here is a 929-residue protein sequence, read N- to C-terminus: Bifunctional uridylyltransferase/uridylyl-removing enzyme (929 aa).

The uridylyltransferase stretch occupies residues 1 to 383 (MDSVTTEHKQ…RPTPAKRRVP (383 aa)). The interval 384–739 (DSDDFIVDNN…VGFDEVRGVT (356 aa)) is uridylyl-removing. An HD domain is found at 499 to 622 (VDEHLIRCVG…VQSVEQMKLL (124 aa)). ACT domains follow at residues 740-822 (ELTI…VVAR) and 850-927 (VIEV…AVQP).

This sequence belongs to the GlnD family. The cofactor is Mg(2+).

The enzyme catalyses [protein-PII]-L-tyrosine + UTP = [protein-PII]-uridylyl-L-tyrosine + diphosphate. It catalyses the reaction [protein-PII]-uridylyl-L-tyrosine + H2O = [protein-PII]-L-tyrosine + UMP + H(+). Its activity is regulated as follows. Uridylyltransferase (UTase) activity is inhibited by glutamine, while glutamine activates uridylyl-removing (UR) activity. Modifies, by uridylylation and deuridylylation, the PII regulatory proteins (GlnB and homologs), in response to the nitrogen status of the cell that GlnD senses through the glutamine level. Under low glutamine levels, catalyzes the conversion of the PII proteins and UTP to PII-UMP and PPi, while under higher glutamine levels, GlnD hydrolyzes PII-UMP to PII and UMP (deuridylylation). Thus, controls uridylylation state and activity of the PII proteins, and plays an important role in the regulation of nitrogen fixation and metabolism. The polypeptide is Bifunctional uridylyltransferase/uridylyl-removing enzyme (Bradyrhizobium diazoefficiens (strain JCM 10833 / BCRC 13528 / IAM 13628 / NBRC 14792 / USDA 110)).